A 436-amino-acid polypeptide reads, in one-letter code: 3-ketoacyl-CoA thiolase (436 aa).

Cys99 acts as the Acyl-thioester intermediate in catalysis. Active-site proton acceptor residues include His392 and Cys422.

Belongs to the thiolase-like superfamily. Thiolase family. Heterotetramer of two alpha chains (FadJ) and two beta chains (FadI).

The protein localises to the cytoplasm. The enzyme catalyses an acyl-CoA + acetyl-CoA = a 3-oxoacyl-CoA + CoA. It participates in lipid metabolism; fatty acid beta-oxidation. Its function is as follows. Catalyzes the final step of fatty acid oxidation in which acetyl-CoA is released and the CoA ester of a fatty acid two carbons shorter is formed. This is 3-ketoacyl-CoA thiolase from Pseudoalteromonas translucida (strain TAC 125).